The following is a 729-amino-acid chain: Fatty acid oxidation complex subunit alpha (729 aa).

The interval 1–189 (MLYQSETLQL…KIGLVDAVVD (189 aa)) is enoyl-CoA hydratase/isomerase. Aspartate 296 is a binding site for substrate. The segment at 311 to 729 (AAPKLAAVLG…LLDVSTNQPA (419 aa)) is 3-hydroxyacyl-CoA dehydrogenase. NAD(+)-binding positions include methionine 324, aspartate 343, 400–402 (VVE), lysine 407, and serine 429. Histidine 450 serves as the catalytic For 3-hydroxyacyl-CoA dehydrogenase activity. NAD(+) is bound at residue asparagine 453. Residues asparagine 500 and tyrosine 660 each coordinate substrate.

The protein in the N-terminal section; belongs to the enoyl-CoA hydratase/isomerase family. In the C-terminal section; belongs to the 3-hydroxyacyl-CoA dehydrogenase family. Heterotetramer of two alpha chains (FadB) and two beta chains (FadA).

The catalysed reaction is a (3S)-3-hydroxyacyl-CoA + NAD(+) = a 3-oxoacyl-CoA + NADH + H(+). It catalyses the reaction a (3S)-3-hydroxyacyl-CoA = a (2E)-enoyl-CoA + H2O. The enzyme catalyses a 4-saturated-(3S)-3-hydroxyacyl-CoA = a (3E)-enoyl-CoA + H2O. It carries out the reaction (3S)-3-hydroxybutanoyl-CoA = (3R)-3-hydroxybutanoyl-CoA. The catalysed reaction is a (3Z)-enoyl-CoA = a 4-saturated (2E)-enoyl-CoA. It catalyses the reaction a (3E)-enoyl-CoA = a 4-saturated (2E)-enoyl-CoA. It participates in lipid metabolism; fatty acid beta-oxidation. In terms of biological role, involved in the aerobic and anaerobic degradation of long-chain fatty acids via beta-oxidation cycle. Catalyzes the formation of 3-oxoacyl-CoA from enoyl-CoA via L-3-hydroxyacyl-CoA. It can also use D-3-hydroxyacyl-CoA and cis-3-enoyl-CoA as substrate. This chain is Fatty acid oxidation complex subunit alpha, found in Yersinia pestis bv. Antiqua (strain Antiqua).